We begin with the raw amino-acid sequence, 626 residues long: Solute carrier family 13 member 4 (626 aa).

4 helical membrane-spanning segments follow: residues 13–33, 52–72, 77–97, and 113–133; these read LLLV…HPSS, AVPL…FGVL, VAAE…CVAA, and VLMA…CTTL. Over residues 217-228 the composition is skewed to polar residues; the sequence is SITNPIKTANQH. A disordered region spans residues 217–252; sequence SITNPIKTANQHQGKKQHPSQEKPQVLTPSPRKQKL. 8 consecutive transmembrane segments (helical) span residues 274–294, 309–329, 372–392, 414–434, 466–486, 499–519, 543–563, and 590–610; these read YSAT…LIFL, FGTW…VSWF, ISYP…LWFT, ATVS…KPCF, IVIL…SGLS, LPPW…TEFV, PLYT…LPVG, and VIGL…LFHL.

The protein belongs to the SLC13A/DASS transporter (TC 2.A.47) family. NADC subfamily. Highly expressed in placenta and testis with intermediate levels in brain and lower levels in heart, thymus and liver.

It is found in the membrane. It catalyses the reaction sulfate(out) + 3 Na(+)(out) = sulfate(in) + 3 Na(+)(in). Transport is inhibited by thiosulfate, phosphate, molybdate, selenate and tungstate. Not inhibited by oxalate, citrate, succinate, phenol red or 4,4'-diisothiocyanostilbene-2,2'-disulfonic acid (DIDS). Functionally, sodium:sulfate symporter that mediates sulfate reabsorption in the high endothelial venules (HEV). This is Solute carrier family 13 member 4 (SLC13A4) from Homo sapiens (Human).